A 302-amino-acid chain; its full sequence is Large ribosomal subunit protein uL29m (302 aa).

It belongs to the universal ribosomal protein uL29 family. Component of the mitochondrial large ribosomal subunit. Mature mitochondrial ribosomes consist of a small (37S) and a large (54S) subunit. The 37S subunit contains at least 33 different proteins and 1 molecule of RNA (15S). The 54S subunit contains at least 45 different proteins and 1 molecule of RNA (21S).

The protein resides in the mitochondrion. This chain is Large ribosomal subunit protein uL29m (MRPL4), found in Debaryomyces hansenii (strain ATCC 36239 / CBS 767 / BCRC 21394 / JCM 1990 / NBRC 0083 / IGC 2968) (Yeast).